We begin with the raw amino-acid sequence, 118 residues long: Large ribosomal subunit protein bL20 (118 aa).

It belongs to the bacterial ribosomal protein bL20 family.

Functionally, binds directly to 23S ribosomal RNA and is necessary for the in vitro assembly process of the 50S ribosomal subunit. It is not involved in the protein synthesizing functions of that subunit. The protein is Large ribosomal subunit protein bL20 of Pseudomonas fluorescens (strain ATCC BAA-477 / NRRL B-23932 / Pf-5).